Consider the following 604-residue polypeptide: Terpenoid synthase 30 (604 aa).

Mg(2+) contacts are provided by Asn356, Asp360, Asn500, Thr504, and Glu508. Residues 356–360 (NDVCD) carry the DDXXD motif; degenerate motif.

Belongs to the terpene synthase family. Tpsa subfamily. Mg(2+) is required as a cofactor. It depends on Mn(2+) as a cofactor.

It localises to the cytoplasm. Its pathway is secondary metabolite biosynthesis; terpenoid biosynthesis. Functionally, involved in terpene biosynthesis in roots. Possesses sesquiterpene (C15) synthase activity and diterpene (C20) synthase activity in vitro. The chain is Terpenoid synthase 30 from Arabidopsis thaliana (Mouse-ear cress).